A 330-amino-acid chain; its full sequence is tRNA N6-adenosine threonylcarbamoyltransferase (330 aa).

2 residues coordinate Fe cation: H110 and H114. Residues M133–G137, D166, G179, D183, and N271 contribute to the substrate site. D299 is a Fe cation binding site.

Belongs to the KAE1 / TsaD family. Fe(2+) serves as cofactor.

The protein resides in the cytoplasm. The catalysed reaction is L-threonylcarbamoyladenylate + adenosine(37) in tRNA = N(6)-L-threonylcarbamoyladenosine(37) in tRNA + AMP + H(+). Required for the formation of a threonylcarbamoyl group on adenosine at position 37 (t(6)A37) in tRNAs that read codons beginning with adenine. Is involved in the transfer of the threonylcarbamoyl moiety of threonylcarbamoyl-AMP (TC-AMP) to the N6 group of A37, together with TsaE and TsaB. TsaD likely plays a direct catalytic role in this reaction. The protein is tRNA N6-adenosine threonylcarbamoyltransferase of Thermosipho africanus (strain TCF52B).